Here is a 383-residue protein sequence, read N- to C-terminus: Forkhead box protein I3-B (383 aa).

Polar residues predominate over residues methionine 1–threonine 12. 3 disordered regions span residues methionine 1 to glycine 55, aspartate 215 to serine 277, and threonine 317 to histidine 348. Positions proline 25–tyrosine 35 are enriched in low complexity. A DNA-binding region (fork-head) is located at residues arginine 130–lysine 224. Positions arginine 220–lysine 226 match the Nuclear localization signal motif. The span at serine 234–serine 249 shows a compositional bias: low complexity. The span at proline 250–serine 277 shows a compositional bias: polar residues. Positions threonine 317–serine 330 are enriched in low complexity.

As to expression, expressed in ionocyte precursors.

It is found in the nucleus. Transcription factor required for epithelial cell differentiation. Involved in specification of skin ionocytes from epidermal precursors. This chain is Forkhead box protein I3-B, found in Danio rerio (Zebrafish).